The following is a 415-amino-acid chain: Methylthioribose-1-phosphate isomerase (415 aa).

Aspartate 284 acts as the Proton donor in catalysis.

This sequence belongs to the eIF-2B alpha/beta/delta subunits family. MtnA subfamily.

Its subcellular location is the cytoplasm. It localises to the nucleus. The catalysed reaction is 5-(methylsulfanyl)-alpha-D-ribose 1-phosphate = 5-(methylsulfanyl)-D-ribulose 1-phosphate. It functions in the pathway amino-acid biosynthesis; L-methionine biosynthesis via salvage pathway; L-methionine from S-methyl-5-thio-alpha-D-ribose 1-phosphate: step 1/6. Functionally, catalyzes the interconversion of methylthioribose-1-phosphate (MTR-1-P) into methylthioribulose-1-phosphate (MTRu-1-P). This is Methylthioribose-1-phosphate isomerase from Vanderwaltozyma polyspora (strain ATCC 22028 / DSM 70294 / BCRC 21397 / CBS 2163 / NBRC 10782 / NRRL Y-8283 / UCD 57-17) (Kluyveromyces polysporus).